The chain runs to 388 residues: Outer membrane protein assembly factor BamB (388 aa).

The first 17 residues, 1-17 (MVLSLLSVMLLSGYKFL), serve as a signal peptide directing secretion.

It belongs to the BamB family. As to quaternary structure, part of the Bam complex, which is composed of the outer membrane protein BamA, and four lipoproteins BamB, BamC, BamD and BamE.

It localises to the cell outer membrane. Part of the outer membrane protein assembly complex, which is involved in assembly and insertion of beta-barrel proteins into the outer membrane. This is Outer membrane protein assembly factor BamB from Moranella endobia (strain PCIT).